A 490-amino-acid polypeptide reads, in one-letter code: Cytochrome P450 71A22 (490 aa).

Residues 2-22 traverse the membrane as a helical segment; sequence ESMIRIILLSLIIFITILFFI. Cys-432 is a binding site for heme.

This sequence belongs to the cytochrome P450 family. Requires heme as cofactor.

It is found in the membrane. The protein is Cytochrome P450 71A22 (CYP71A22) of Arabidopsis thaliana (Mouse-ear cress).